The sequence spans 194 residues: Ras-related protein Rab-22A (194 aa).

GTP is bound at residue 12 to 20 (GDTGVGKSS). The Effector region signature appears at 34–42 (INPTIGASF). Residues 60–64 (DTAGQ), 118–121 (NKCD), and 148–150 (SAK) contribute to the GTP site. The interval 170-194 (DANPPSGGKGFKLRRQPSEPQRSCC) is disordered. 2 S-geranylgeranyl cysteine lipidation sites follow: Cys193 and Cys194.

This sequence belongs to the small GTPase superfamily. Rab family. As to quaternary structure, interacts directly with ZFYVE20. Interacts (in its GTP-bound form) with RINL and RABGEF1. Binds EEA1.

The protein localises to the endosome membrane. It localises to the cell membrane. It is found in the early endosome. Its subcellular location is the late endosome. The protein resides in the cell projection. The protein localises to the ruffle. It localises to the cytoplasmic vesicle. It is found in the phagosome. Its subcellular location is the phagosome membrane. Functionally, plays a role in endocytosis and intracellular protein transport. Mediates trafficking of TF from early endosomes to recycling endosomes. Required for NGF-mediated endocytosis of NTRK1, and subsequent neurite outgrowth. Binds GTP and GDP and has low GTPase activity. Alternates between a GTP-bound active form and a GDP-bound inactive form. This Canis lupus familiaris (Dog) protein is Ras-related protein Rab-22A (RAB22A).